The following is an 89-amino-acid chain: UPF0175 protein APE_0276a (89 aa).

The protein belongs to the UPF0175 family.

This chain is UPF0175 protein APE_0276a, found in Aeropyrum pernix (strain ATCC 700893 / DSM 11879 / JCM 9820 / NBRC 100138 / K1).